The sequence spans 452 residues: Eukaryotic translation initiation factor 3 subunit E (452 aa).

The span at 1 to 17 (MADNTPTTANDLLNDAT) shows a compositional bias: polar residues. The tract at residues 1–23 (MADNTPTTANDLLNDATQAAAKS) is disordered. Residues 246 to 426 (PFFNHEPARD…GTVVMNHPPS (181 aa)) enclose the PCI domain.

Belongs to the eIF-3 subunit E family. In terms of assembly, component of the eukaryotic translation initiation factor 3 (eIF-3) complex.

It is found in the cytoplasm. Component of the eukaryotic translation initiation factor 3 (eIF-3) complex, which is involved in protein synthesis of a specialized repertoire of mRNAs and, together with other initiation factors, stimulates binding of mRNA and methionyl-tRNAi to the 40S ribosome. The eIF-3 complex specifically targets and initiates translation of a subset of mRNAs involved in cell proliferation. This is Eukaryotic translation initiation factor 3 subunit E (int6) from Botryotinia fuckeliana (strain B05.10) (Noble rot fungus).